The sequence spans 133 residues: Small ribosomal subunit protein uS9 (133 aa).

Residues 102–133 form a disordered region; the sequence is KPKGLLTRDPREVERKKYGLKKARRAPQFSKR. The span at 107 to 118 shows a compositional bias: basic and acidic residues; it reads LTRDPREVERKK. Basic residues predominate over residues 119–133; that stretch reads YGLKKARRAPQFSKR.

Belongs to the universal ribosomal protein uS9 family.

This is Small ribosomal subunit protein uS9 from Deinococcus deserti (strain DSM 17065 / CIP 109153 / LMG 22923 / VCD115).